A 586-amino-acid polypeptide reads, in one-letter code: MSVHQIRKRAVLPPIICRSDKEFLESMQRYIITETERLGYNEEGPADEYYIIYRNVFDKVIEHVTAYKSILTSIKKEYDAFIETIKKGRRTAFCLHGKLKGLAAEPTALVYHRKRTIQLEAKMRIIENNSSKIQSQIDQIKQSRAAYDTKEVKYCTFSKDPSKPIPGMTLQESMNLDALTKYMKHLEDKYAEIKQAMLIKYVPAQRKSDLDEEMIVLLKRRDVAENLNRKLQFCHQRLQIISQALTSWVKSDMSSPFQDFVEQIQKTKYLQGDQGIVEELMEDDPHRAKEAEIMLHYIERFNELISLGEYEKAACYAANSPRRILRNIGTMNTFKAVGKIRGKPLPLLLFFEALFITSHAFRCPVDAALTLEGIKCGLSEKRLDLVINWVTQQRLTFSEEAGDVICDYGEQDTYNKAKCLALAQIIYSECGLHKKAILCLCKQGQTHRVMEYIQQFKDFTTDDLLQLLMSCPQIELIQCLTKELNEKQTSLSFGLAILHLFSIDKKKIGIKLLQEINKGGIDAVESLMINDSFCSTERWQEVANICSQNGFDKLSNDIMSILRSQAAVTEISEEDDAVNLMEHVFW.

The stretch at 174-232 forms a coiled coil; that stretch reads MNLDALTKYMKHLEDKYAEIKQAMLIKYVPAQRKSDLDEEMIVLLKRRDVAENLNRKLQ.

This chain is Clathrin heavy chain linker domain-containing protein 1 (CLHC1), found in Macaca fascicularis (Crab-eating macaque).